Reading from the N-terminus, the 314-residue chain is 2,3-dihydroxyphenylpropionate/2,3-dihydroxicinnamic acid 1,2-dioxygenase (314 aa).

His-115 acts as the Proton donor in catalysis. The active-site Proton acceptor is the His-179.

Belongs to the LigB/MhpB extradiol dioxygenase family. As to quaternary structure, homotetramer. It depends on Fe(2+) as a cofactor.

The catalysed reaction is 3-(2,3-dihydroxyphenyl)propanoate + O2 = (2Z,4E)-2-hydroxy-6-oxonona-2,4-dienedioate + H(+). The enzyme catalyses (2E)-3-(2,3-dihydroxyphenyl)prop-2-enoate + O2 = (2Z,4E,7E)-2-hydroxy-6-oxonona-2,4,7-trienedioate + H(+). The protein operates within aromatic compound metabolism; 3-phenylpropanoate degradation. In terms of biological role, catalyzes the non-heme iron(II)-dependent oxidative cleavage of 2,3-dihydroxyphenylpropionic acid and 2,3-dihydroxicinnamic acid into 2-hydroxy-6-ketononadienedioate and 2-hydroxy-6-ketononatrienedioate, respectively. This Klebsiella pneumoniae (strain 342) protein is 2,3-dihydroxyphenylpropionate/2,3-dihydroxicinnamic acid 1,2-dioxygenase.